A 316-amino-acid chain; its full sequence is DMOA farnesyltransferase nvfB (316 aa).

The next 9 helical transmembrane spans lie at Val-47–Leu-67, Leu-71–Ile-91, Trp-115–Leu-135, Cys-139–Phe-159, Phe-162–Gly-182, Pro-191–Ser-211, Ile-234–Tyr-254, Leu-258–Leu-278, and Lys-294–Leu-314.

It belongs to the UbiA prenyltransferase family.

It localises to the membrane. The enzyme catalyses 3,5-dimethylorsellinate + (2E,6E)-farnesyl diphosphate = (3R)-3-farnesyl-6-hydroxy-2,3,5-trimethyl-4-oxocyclohexa-1,5-diene-1-carboxylate + diphosphate + H(+). It functions in the pathway secondary metabolite biosynthesis; terpenoid biosynthesis. DMOA farnesyltransferase; part of the gene cluster that mediates the biosynthesis of novofumigatonin, a heavily oxygenated meroterpenoid containing a unique orthoester moiety. The first step of the pathway is the synthesis of 3,5-dimethylorsellinic acid (DMOA) by the polyketide synthase nvfA via condensation of one acetyl-CoA starter unit with 3 malonyl-CoA units and 2 methylations. DMOA is then converted to farnesyl-DMOA by the farnesyltransferase nvfB. Epoxydation by FAD-dependent monooxygenase nvfK, followed by a protonation-initiated cyclization catalyzed by the terpene cyclase nvfL leads to the production of asnavolin H. The short chain dehydrogenase nvfC then as a 3-OH dehydrogenase of asnovolin H to yield chemesin D. There are two branches to synthesize asnovolin A from chemesin D. In one branch, chemesin D undergoes Baeyer-Villiger oxidation by nvfH, methylation by nvfJ, and enoyl reduction by the nvfM D enoylreductase that reduces the double bond between C-5'and C-6', to form respectively asnovolin I, asnovolin K, and asnovolin A. In the other branch, the methylation precedes the Baeyer-Villiger oxidation and the enoyl reduction to yield asnovolin A via the asnovolin J intermediate. Asnovolin A is further converted to fumigatonoid A by the Fe(II)/2-oxoglutarate-dependent dioxygenase nvfI that catalyzes an endoperoxidation reaction. The alpha/beta hydrolase nvfD then acts as an epimerase that converts fumigatonoid A to its C-5' epimer, which then undergoes spontaneous or nvfD-catalyzed lactonization. The following step utilizes the ketoreductase nvfG to produce fumigatonoid B. The dioxygenase nvfE further converts fumigatonoid B into fumigatonoid C. Finally the Fe(II)/2-oxoglutarate-dependent dioxygenase nvfF catalyzes two rounds of oxidation to transform fumigatonoid C into the end product, novofumigatonin A. This chain is DMOA farnesyltransferase nvfB, found in Aspergillus novofumigatus (strain IBT 16806).